A 214-amino-acid chain; its full sequence is ATP phosphoribosyltransferase (214 aa).

This sequence belongs to the ATP phosphoribosyltransferase family. Short subfamily. In terms of assembly, heteromultimer composed of HisG and HisZ subunits.

It localises to the cytoplasm. It carries out the reaction 1-(5-phospho-beta-D-ribosyl)-ATP + diphosphate = 5-phospho-alpha-D-ribose 1-diphosphate + ATP. It participates in amino-acid biosynthesis; L-histidine biosynthesis; L-histidine from 5-phospho-alpha-D-ribose 1-diphosphate: step 1/9. Catalyzes the condensation of ATP and 5-phosphoribose 1-diphosphate to form N'-(5'-phosphoribosyl)-ATP (PR-ATP). Has a crucial role in the pathway because the rate of histidine biosynthesis seems to be controlled primarily by regulation of HisG enzymatic activity. This chain is ATP phosphoribosyltransferase, found in Halorhodospira halophila (strain DSM 244 / SL1) (Ectothiorhodospira halophila (strain DSM 244 / SL1)).